The following is a 93-amino-acid chain: Acylphosphatase (93 aa).

One can recognise an Acylphosphatase-like domain in the interval 3–93 (KQQYFISGKV…FQFNNFKIYY (91 aa)). Catalysis depends on residues Arg-18 and Asn-36.

It belongs to the acylphosphatase family.

The enzyme catalyses an acyl phosphate + H2O = a carboxylate + phosphate + H(+). This is Acylphosphatase (acyP) from Borrelia garinii subsp. bavariensis (strain ATCC BAA-2496 / DSM 23469 / PBi) (Borreliella bavariensis).